Consider the following 419-residue polypeptide: Tyrosine--tRNA ligase (419 aa).

Y34 serves as a coordination point for L-tyrosine. The 'HIGH' region signature appears at 39–48; the sequence is PTADSLHLGN. Y169 and Q173 together coordinate L-tyrosine. The 'KMSKS' region signature appears at 229–233; it reads KFGKS. K232 contacts ATP. The S4 RNA-binding domain occupies 353 to 419; it reads LTLIELLISV…GKKKNFVLTY (67 aa).

This sequence belongs to the class-I aminoacyl-tRNA synthetase family. TyrS type 1 subfamily. Homodimer.

The protein resides in the cytoplasm. It carries out the reaction tRNA(Tyr) + L-tyrosine + ATP = L-tyrosyl-tRNA(Tyr) + AMP + diphosphate + H(+). In terms of biological role, catalyzes the attachment of tyrosine to tRNA(Tyr) in a two-step reaction: tyrosine is first activated by ATP to form Tyr-AMP and then transferred to the acceptor end of tRNA(Tyr). The polypeptide is Tyrosine--tRNA ligase (Lactococcus lactis subsp. cremoris (strain MG1363)).